The primary structure comprises 673 residues: UvrABC system protein B (673 aa).

Residues 26–414 form the Helicase ATP-binding domain; sequence ANFEAGLAKQ…AGEVTELVVR (389 aa). 39-46 contacts ATP; that stretch reads GVTGSGKT. The Beta-hairpin signature appears at 92–115; the sequence is YYDYYQPEAYVPSSDTFIEKDSSI. Residues 431–597 form the Helicase C-terminal domain; that stretch reads QVDDLMSEVH…SVERPIADIM (167 aa). Composition is skewed to basic and acidic residues over residues 600 to 609 and 618 to 628; these read ARDDAAEKKS and HVAEETPDYRA. The disordered stretch occupies residues 600-628; it reads ARDDAAEKKSGKGRSKSRHVAEETPDYRA. One can recognise a UVR domain in the interval 635–670; that stretch reads AGKLKSLEQKMYQHAKDLEFEAAAQIRDQIQKLKAA.

The protein belongs to the UvrB family. In terms of assembly, forms a heterotetramer with UvrA during the search for lesions. Interacts with UvrC in an incision complex.

The protein localises to the cytoplasm. In terms of biological role, the UvrABC repair system catalyzes the recognition and processing of DNA lesions. A damage recognition complex composed of 2 UvrA and 2 UvrB subunits scans DNA for abnormalities. Upon binding of the UvrA(2)B(2) complex to a putative damaged site, the DNA wraps around one UvrB monomer. DNA wrap is dependent on ATP binding by UvrB and probably causes local melting of the DNA helix, facilitating insertion of UvrB beta-hairpin between the DNA strands. Then UvrB probes one DNA strand for the presence of a lesion. If a lesion is found the UvrA subunits dissociate and the UvrB-DNA preincision complex is formed. This complex is subsequently bound by UvrC and the second UvrB is released. If no lesion is found, the DNA wraps around the other UvrB subunit that will check the other stand for damage. This Xanthomonas axonopodis pv. citri (strain 306) protein is UvrABC system protein B.